A 358-amino-acid chain; its full sequence is UDP-N-acetylglucosamine--N-acetylmuramyl-(pentapeptide) pyrophosphoryl-undecaprenol N-acetylglucosamine transferase (358 aa).

UDP-N-acetyl-alpha-D-glucosamine is bound by residues 11–13, arginine 163, serine 191, isoleucine 245, and glutamine 290; that span reads TGG.

It belongs to the glycosyltransferase 28 family. MurG subfamily.

The protein resides in the cell inner membrane. The catalysed reaction is di-trans,octa-cis-undecaprenyl diphospho-N-acetyl-alpha-D-muramoyl-L-alanyl-D-glutamyl-meso-2,6-diaminopimeloyl-D-alanyl-D-alanine + UDP-N-acetyl-alpha-D-glucosamine = di-trans,octa-cis-undecaprenyl diphospho-[N-acetyl-alpha-D-glucosaminyl-(1-&gt;4)]-N-acetyl-alpha-D-muramoyl-L-alanyl-D-glutamyl-meso-2,6-diaminopimeloyl-D-alanyl-D-alanine + UDP + H(+). The protein operates within cell wall biogenesis; peptidoglycan biosynthesis. In terms of biological role, cell wall formation. Catalyzes the transfer of a GlcNAc subunit on undecaprenyl-pyrophosphoryl-MurNAc-pentapeptide (lipid intermediate I) to form undecaprenyl-pyrophosphoryl-MurNAc-(pentapeptide)GlcNAc (lipid intermediate II). This chain is UDP-N-acetylglucosamine--N-acetylmuramyl-(pentapeptide) pyrophosphoryl-undecaprenol N-acetylglucosamine transferase, found in Janthinobacterium sp. (strain Marseille) (Minibacterium massiliensis).